We begin with the raw amino-acid sequence, 139 residues long: Prostate-associated microseminoprotein (139 aa).

Positions 1–35 (MALRMLWAGQAKGILGGWRTICLVVSLFLQHPGVS) are cleaved as a signal peptide. 5 cysteine pairs are disulfide-bonded: cysteine 38–cysteine 78, cysteine 46–cysteine 69, cysteine 64–cysteine 100, cysteine 67–cysteine 77, and cysteine 91–cysteine 114. The segment at 116-139 (GGGPDLEWGSANTPAPGASAPHSS) is disordered.

It belongs to the beta-microseminoprotein family.

It localises to the secreted. In terms of biological role, acts as a ligand for C-C chemokine receptor CCR2. Signals through binding and activation of CCR2 and induces a strong chemotactic response and mobilization of intracellular calcium ions. Exhibits a chemotactic activity for monocytes and lymphocytes but not neutrophils. The sequence is that of Prostate-associated microseminoprotein (Msmp) from Mus musculus (Mouse).